Here is a 2050-residue protein sequence, read N- to C-terminus: Unconventional myosin-XVIIIa (2050 aa).

Composition is skewed to basic and acidic residues over residues 1 to 17 and 23 to 34; these read MFNL…GRKE and EKKERMSAAELR. Residues 1 to 34 are disordered; the sequence is MFNLMKKDKDKDGGRKEKKEKKEKKERMSAAELR. The segment at 1–398 is mediates nucleotide-independent binding to F-actin and interaction with GOLPH3; the sequence is MFNLMKKDKD…LDVDEDDIEK (398 aa). A phosphoserine mark is found at serine 35, serine 52, serine 72, and serine 74. Residue threonine 79 is modified to Phosphothreonine. 2 positions are modified to phosphoserine: serine 83 and serine 98. Threonine 99 bears the Phosphothreonine mark. A phosphoserine mark is found at serine 102 and serine 103. The short motif at 114-118 is the Interaction with actin element; the sequence is RGSVL. A phosphoserine mark is found at serine 140, serine 145, serine 157, serine 160, serine 164, serine 234, and isoleucine 340. The tract at residues 140 to 167 is disordered; that stretch reads SFSQRSRDESASETSTPSEHSAAPSPQV. Residues 220–311 enclose the PDZ domain; it reads ELELQRRPTG…SVRLKVQPIP (92 aa). In terms of domain architecture, Myosin N-terminal SH3-like spans 349-401; sequence TEKVWLVHRDGFSLASQLKSEELSLPEGKARVKLDHDGAILDVDEDDIEKANA. One can recognise a Myosin motor domain in the interval 405–1181; the sequence is DRLEDLASLV…TLARLEEQRD (777 aa). 498-505 is a binding site for ATP; it reads GSSGSGKT. A phosphoserine mark is found at serine 983, serine 1063, serine 1064, and serine 1066. The interval 1051 to 1071 is disordered; it reads PGEPRSASSRRVSSSSELDLP. Positions 1055–1066 are enriched in low complexity; that stretch reads RSASSRRVSSSS. In terms of domain architecture, IQ spans 1184 to 1213; it reads TSRHLTLFQAACRGYLARQHFKKRKIQDLA. Residues 1242-1967 are a coiled coil; sequence LIQVQLSEEQ…KKNKLEGDSD (726 aa). Residues 1448–1477 form a disordered region; the sequence is RNHELEKKQRRFDSELSQAHEETQREKLQR. Serine 1636 carries the post-translational modification Phosphoserine. Residues 1848 to 1897 are disordered; sequence MEKLTEERDQRAAAENREKEQNKRLQRQLRDTKEEMSELARKEAEASRKK. Serine 1938, serine 1966, serine 1970, serine 1994, serine 1998, serine 2002, serine 2003, serine 2016, serine 2032, serine 2037, and serine 2039 each carry phosphoserine. The interval 1955 to 2050 is disordered; sequence YQKKKNKLEG…TEAKLTETSA (96 aa). Threonine 2041 is modified (phosphothreonine). Basic and acidic residues predominate over residues 2041-2050; the sequence is TEAKLTETSA.

It belongs to the TRAFAC class myosin-kinesin ATPase superfamily. Myosin family. As to quaternary structure, homodimer. Forms a tripartite complex with CDC42BPA/CDC42BPB and LURAP1 with the latter acting as an adapter connecting CDC42BPA/CDC42BPB and MYO18A. Binds F-actin; regulated by ADP and GOLPH3. Interacts with GOLPH3; the interaction is direct and may link Golgi membranes to the actin cytoskeleton. Interacts with JAK3. Interacts with MSR1 and CD14. In terms of processing, phosphorylated on tyrosine upon CSF1R activation. Isoform 6 is phosphorylated on Ser-340. As to expression, isoform 1; Expressed ubiquitously. Isoform 2: Specifically expressed in most hematopoietic cells. Isoform 3: Predominantly expressed in alveolar macrophages.

It localises to the golgi apparatus. The protein resides in the trans-Golgi network. Its subcellular location is the golgi outpost. The protein localises to the cytoplasm. It is found in the cytoskeleton. It localises to the microtubule organizing center. The protein resides in the endoplasmic reticulum-Golgi intermediate compartment. May link Golgi membranes to the cytoskeleton and participate in the tensile force required for vesicle budding from the Golgi. Thereby, may play a role in Golgi membrane trafficking and could indirectly give its flattened shape to the Golgi apparatus. Alternatively, in concert with LURAP1 and CDC42BPA/CDC42BPB, has been involved in modulating lamellar actomyosin retrograde flow that is crucial to cell protrusion and migration. May be involved in the maintenance of the stromal cell architectures required for cell to cell contact. Regulates trafficking, expression, and activation of innate immune receptors on macrophages. Plays a role to suppress inflammatory responsiveness of macrophages via a mechanism that modulates CD14 trafficking. Acts as a receptor of surfactant-associated protein A (SFTPA1/SP-A) and plays an important role in internalization and clearance of SFTPA1-opsonized S.aureus by alveolar macrophages. Strongly enhances natural killer cell cytotoxicity. The protein is Unconventional myosin-XVIIIa (Myo18a) of Mus musculus (Mouse).